A 698-amino-acid polypeptide reads, in one-letter code: MRLAVGALLVCAVLGLCLAVPDKTVRWCAVSEHEATKCQSFRDHMKSVIPSDGPSVACVKKASYLDCIRAIAANEADAVTLDAGLVYDAYLAPNNLKPVVAEFYGSKEDPQTFYYAVAVVKKDSGFQMNQLRGKKSCHTGLGRSAGWNIPIGLLYCDLPEPRKPLEKAVANFFSGSCAPCADGTDFPQLCQLCPGCGCSTLNQYFGYSGAFKCLKDGAGDVAFVKHSTIFENLANKADRDQYELLCLDNTRKPVDEYKDCHLAQVPSHTVVARSMGGKEDLIWELLNQAQEHFGKDKSKEFQLFSSPHGKDLLFKDSAHGFLKVPPRMDAKMYLGYEYVTAIRNLREGTCPEATTDECKPVKWCALSHHERLKCDEWSVNSVGKIECVSAETTEDCIAKIMNGEADAMSLDGGFVYIAGKCGLVPVLAENYNKNDNCEDTPEAGYFAVAVVKKSASDLTWDNLKGKKSCHTAVGRTAGWNIPMGLLYNKINHCRFDEFFSEGCAPGSKKDSSLCKLCMGSGPNLCEPNNKEGYYGYTGAFRCLVEKGDVAFVKHQTVPQNTGGKNPDPWAKNLNEKDYELLCLDGTRKPVKEYANCHLARAPNHAVVTRKDKEACVHKILRQQQHLFGSNVTDCSGNFCLFRSETKDLLFRDDTVCLAKLHDRNTYEKYLGEEYVKAVGNLRKCSTSSLLEACTFRRP.

Residues 1-19 (MRLAVGALLVCAVLGLCLA) form the signal peptide. Transferrin-like domains follow at residues 25-347 (VRWC…NLRE) and 361-683 (VKWC…NLRK). 2 disulfide bridges follow: Cys-28–Cys-67 and Cys-38–Cys-58. Arg-42 carries the dimethylated arginine modification. The O-linked (GalNAc...) serine glycan is linked to Ser-51. Fe(3+) contacts are provided by Asp-82 and Tyr-114. Intrachain disulfides connect Cys-137/Cys-213, Cys-156/Cys-350, Cys-177/Cys-193, Cys-180/Cys-196, Cys-190/Cys-198, Cys-246/Cys-260, Cys-358/Cys-615, Cys-364/Cys-396, Cys-374/Cys-387, Cys-421/Cys-693, Cys-437/Cys-656, Cys-469/Cys-542, Cys-493/Cys-684, Cys-503/Cys-517, Cys-514/Cys-525, Cys-582/Cys-596, and Cys-634/Cys-639. Residues Thr-139, Arg-143, Ala-145, and Gly-146 each contribute to the hydrogencarbonate site. Residue Tyr-207 participates in Fe(3+) binding. Fe(3+) is bound at residue His-268. Ser-389 is subject to Phosphoserine. Asp-411 and Tyr-445 together coordinate Fe(3+). Hydrogencarbonate is bound by residues Thr-471, Arg-475, Ala-477, and Gly-478. Fe(3+) is bound at residue Tyr-536. Position 604 (His-604) interacts with Fe(3+). The N-linked (GlcNAc...) asparagine glycan is linked to Asn-630. Ser-685 carries the post-translational modification Phosphoserine.

This sequence belongs to the transferrin family. In terms of assembly, monomer. Part of a complex composed of SLC40A1/ferroportin, TF/transferrin and HEPH/hephaestin that transfers iron from cells to transferrin. Expressed by the liver and secreted in plasma.

Its subcellular location is the secreted. Functionally, transferrins are iron binding transport proteins which can bind two Fe(3+) ions in association with the binding of an anion, usually bicarbonate. It is responsible for the transport of iron from sites of absorption and heme degradation to those of storage and utilization. Serum transferrin may also have a further role in stimulating cell proliferation. This Pan troglodytes (Chimpanzee) protein is Serotransferrin (TF).